Reading from the N-terminus, the 276-residue chain is 6-chlorohydroxyquinol 1,2-dioxygenase (276 aa).

Residues tyrosine 157, tyrosine 191, histidine 215, and histidine 217 each contribute to the Fe cation site.

It belongs to the intradiol ring-cleavage dioxygenase family. Fe(3+) is required as a cofactor.

The protein operates within aromatic compound metabolism. It functions in the pathway xenobiotic degradation. Functionally, involved in the degradation of 2,4,6-trichlorophenol (2,4,6-TCP). May catalyze the oxidation of 6-chlorohydroxyquinol (6-CHQ) to 2-chloromaleylacetate (2-CMA). This chain is 6-chlorohydroxyquinol 1,2-dioxygenase, found in Cupriavidus pinatubonensis (strain JMP 134 / LMG 1197) (Cupriavidus necator (strain JMP 134)).